The following is a 2515-amino-acid chain: MRLTIPPSSMEEPKGKLSEEENVCLFPKLTQVGLPAPASVAIETVGLGLEISRAMNERFSYDRLLELQVMLSTVWAIVIHRFVEANPVFFAMVIDDEVSASTESCRNLWKTLIDPTTSVGVLNDIKRWEICPLAEHHQGSFNTGLFILSKNLETAQMLDVNLVAQPKGSEFTLELVYQPKHLSPFHAQHLMSAVSSAIHGVASAEPNRSLCDISLCTSSQQKQILYWQNSRLKEGPSLAMYQIVAELATRQPGAQAVQSSKSALTYLELDDLSSRLAIHLQARYNLAPGAMIMLCATKDVWAVVAMLAINKTGACFVPCDASHPVSRRQTMAGKCQSELALVSPEHETLFQGIIKESFIISEATVTKLPQETRDSWTVGERFPVAPSTPAYCFFTSGSLGEPKGCLGTHSALAAVAHQVPALRMDTKSRVLQFAKFGFGISFIEIFCTLAAGGTVCIASEHERLNALDAAIRRMEVNWALITPTLAQSLSPEEIPTLRKLFLGGEAPNDDLISRWQSKASLFQVFGTTEMAGVTMVSSEITSTAQRKIVGFPANSRIWLVESTGKDSNDTRLAPIGAVAELLIEGPSLAEGYLGDPVRTQASFLSLPSWLPDGYSGSTRLYKTGDLVRYNGDGSLSYIGRMGTQVKLRGQRIELEEVECHLVRLLPGTHSFSEARLVIALVVEPRGDAEKRTLAAFVLVPPKVNSPRSSDTGRLEFVKPDTPHLYEELEDIRQRLQGTLPSFMVPQLLFVLTDVPRTVTGKIDRSGLQRQINALPYDELRRISGRRVDMQVPGSEVEHLIHAIVCEILAIRSDQVSMRDDFFHLGGNSMSAIKLAAAAKRRSLKLVVADIFKHSVLADMATVALKTSNGVHAHTTIHGTTIHGAPTKTTLERFKLLSEYSVTREDINEAVATQCGISYSSLTVDAYPCSPLQEGMMSMTEKSATMYRAQVVCKLHSGIQIDRFQAAWEGVVENNDILRTRLISVSSKGMWQIVISEPFEWDRDASRAVSDSMGLGTRLVRAAIETSKDGAVFILTIHHVLCDLWTIRLLLDQLWSSYDSITDGVAGPNYYRPFIEYVLERSRDPASASYWKARFSGLEAEAFPRLPQPDLSPSPDEKTTCHINLPPLVTGGITVATYLRLAWAMVVSHHTAVDDVVFGETLNGRSGRLQEQSDESLEKIVGPAIVTVPQRILLDPERSVAETLSLIQEQQTQMISFEQVGLQHIRRLSPEADCACMFQSHLVFQPAWKPPGQLFKSVEAGASEVGGFSSYALGLECGLSEDENEVDITAYFDSRVVSRAQAARLLNHLEMVLQSLVQEPYQTIRSVPHITPEDLDQIHAWNVTLPDGLKECAHEAIRKQSQETPSAPAIRAWDGDLTYEELEHYSNQIAVAIVDRGIRQGSLIPLLFEKSMWMTVAMIGVNKAGGAFVPMDSAQPLQRLRVIAELTECTVILCSKSNTELAKQISPNAIILPVPGCREGGSIMQDSGQGLVDLQCLPKVQPHDLMYAVFTSGSTGTPKGVLIEHGSYCTAARECSSAHEIDRQSRMLQFASYSFDAFLAESLNTLVVGGCVCVPSEKDRQNGLAKAMREMQVTHAMLTPAISRLFRHEDVPSLRSLILMGEAMRSADFDYWGSHIQLFNGYGPTECTIALSCREYQAGVHVNDIGWPRAAAAWIIDPRNPNRLMPIGAVGELVVEGPPVARGYLKSPDQTSKAFISPPSWRPQTHQSHRMYRTGDLVSYTEDRSLRIVGRMNDQIKLRSQRLERGEVESRLRQFWQPPGVEVAVDVIVPAGDADRVSLAAFIVQEGSEQNNSDKNADHGTDCRSLCRNPTAEFSRVATQVEAQLQQELPRFMVPSIFVPVSRMPHMPSGKIDRPRLKRELEASPWEELRRYLPSAAPSRLATTNEERTLQEIWAQVLHLPSSKVGIDDNFFHLGGDSVNGMQAVVQARARNIPHTLEEIFRWKTIAAILSHLTGRKHQERPPRHHDSNLTKTNNHLESFRGTLARSRLPFEGVEDIYPCGPIQQNILLVHSRRPAFYHVAFTWEIHDATVDMVVRAVKQLIARHAIFRTRFLEPDIVDGSFLQIVLRQGQQDIPIRSVSEGLIDFPGDFQPTARCPSQFTIYHRDWSSVHVRLDITHALWDGGPATVVERELGLASHSKPLPPDPPLYRDYISYVQSQDLAAGEAFWSSHIKDTSPCHFPSLRATRMYEPDVPQDLHFELDQHAEVGPFCRRHNVTAPNMFCLAWGLVLRAVTSMDEVCFGNVVSGRDLPLTGALEMVGPLINLLPCRINLREGTVIETLQRIYHDYAACLSHQAFPIANLPHSSGRSALTLFNTQLSIRRATTASQPGEEAPKACLRAIQSWDPHECRINVYVIMEESRTRVEMRYWKSAMSPAQAALIEKCFSAAVSQILAHGDQPLTELGILPPEEQKRVWEPSLSAAVVRLRELWAKVLDIPHHLIGGEDDFFRLGGNSVRALQVTGLAREAGMDLRVADVFTASTLHAMARRSLVVSQSG.

The adenylation 1 stretch occupies residues glutamate 246 to arginine 648. One can recognise a Carrier 1 domain in the interval serine 794–serine 867. Serine 828 bears the O-(pantetheine 4'-phosphoryl)serine mark. The interval aspartate 924–glutamate 1332 is condensation 1. The tract at residues arginine 1357 to arginine 1758 is adenylation 2. A Carrier 2 domain is found at leucine 1900 to lysine 1976. The residue at position 1937 (serine 1937) is an O-(pantetheine 4'-phosphoryl)serine. The tract at residues valine 2013–lysine 2431 is condensation 2. The region spanning proline 2436–serine 2512 is the Carrier 3 domain. At serine 2473 the chain carries O-(pantetheine 4'-phosphoryl)serine.

This sequence belongs to the NRP synthetase family.

The protein operates within secondary metabolite biosynthesis. In terms of biological role, nonribosomal peptide synthetase; part of the gene cluster that mediates the biosynthesis of terreazepine,. The first step of terreazepine biosynthesis is catalyzed by the indoleamine 2,3-dioxygenase tpzB which produces N-formyl-kynurenine through the catabolism of tryptophan. The two-module NRPS tpzA then utilizes anthranilate and kynurenine to assemble terreazepine. The first adenylation domain of tpzA (A1) loads anthranilate onto the T1 domain, while A2 loads kynurenine, generated through spontaneous nonenzymatic deformylation of the tzpB-supplied N-formyl-kynurenine. TpzA produces a 2:1 mixture of S-R enantiomers, which suggests that the A2 domain accepts both D- and L-kynurenine. The peptide bond formation between the tethered amino acids is catalyzed by the first condensation domain (C1) between anthranilate's carbonyl carbon and kynurenine's aliphatic primary amine. The second C domain (C2) catalyzes the final cyclization event between the aromatic amine of kynurenine and the tethered carbonyl carbon, yielding the final terreazepine product. The T3 domain may facilitate the interaction with downstream tailoring enzymes. The sequence is that of Nonribosomal peptide synthetase tpzA from Aspergillus terreus (strain NIH 2624 / FGSC A1156).